The sequence spans 303 residues: Putative CRISPR-associated endonuclease Cas1 2 (303 aa).

A Mn(2+)-binding site is contributed by Glu-149.

Belongs to the CRISPR-associated endonuclease Cas1 family. As to quaternary structure, homodimer, forms a heterotetramer with a Cas2 homodimer. The cofactor is Mg(2+). It depends on Mn(2+) as a cofactor.

CRISPR (clustered regularly interspaced short palindromic repeat), is an adaptive immune system that provides protection against mobile genetic elements (viruses, transposable elements and conjugative plasmids). CRISPR clusters contain sequences complementary to antecedent mobile elements and target invading nucleic acids. CRISPR clusters are transcribed and processed into CRISPR RNA (crRNA). Acts as a dsDNA endonuclease. Involved in the integration of spacer DNA into the CRISPR cassette. This is Putative CRISPR-associated endonuclease Cas1 2 from Methanospirillum hungatei JF-1 (strain ATCC 27890 / DSM 864 / NBRC 100397 / JF-1).